Reading from the N-terminus, the 365-residue chain is DNA replication and repair protein RecF (365 aa).

30–37 (GRNAQGKT) is a binding site for ATP.

Belongs to the RecF family.

It is found in the cytoplasm. Its function is as follows. The RecF protein is involved in DNA metabolism; it is required for DNA replication and normal SOS inducibility. RecF binds preferentially to single-stranded, linear DNA. It also seems to bind ATP. The protein is DNA replication and repair protein RecF of Streptococcus pneumoniae serotype 2 (strain D39 / NCTC 7466).